The primary structure comprises 251 residues: 4-hydroxy-tetrahydrodipicolinate reductase (251 aa).

Residues 8 to 13, 76 to 78, and 106 to 109 contribute to the NAD(+) site; these read GAKGRM, GTT, and APNF. The active-site Proton donor/acceptor is the His-136. A (S)-2,3,4,5-tetrahydrodipicolinate-binding site is contributed by His-137. The active-site Proton donor is the Lys-140. 146–147 contributes to the (S)-2,3,4,5-tetrahydrodipicolinate binding site; sequence GT.

This sequence belongs to the DapB family.

The protein resides in the cytoplasm. The enzyme catalyses (S)-2,3,4,5-tetrahydrodipicolinate + NAD(+) + H2O = (2S,4S)-4-hydroxy-2,3,4,5-tetrahydrodipicolinate + NADH + H(+). It catalyses the reaction (S)-2,3,4,5-tetrahydrodipicolinate + NADP(+) + H2O = (2S,4S)-4-hydroxy-2,3,4,5-tetrahydrodipicolinate + NADPH + H(+). It functions in the pathway amino-acid biosynthesis; L-lysine biosynthesis via DAP pathway; (S)-tetrahydrodipicolinate from L-aspartate: step 4/4. Catalyzes the conversion of 4-hydroxy-tetrahydrodipicolinate (HTPA) to tetrahydrodipicolinate. The protein is 4-hydroxy-tetrahydrodipicolinate reductase of Bifidobacterium longum subsp. infantis (strain ATCC 15697 / DSM 20088 / JCM 1222 / NCTC 11817 / S12).